We begin with the raw amino-acid sequence, 140 residues long: Actin-depolymerizing factor 8 (140 aa).

Phosphoserine is present on serine 6. Residues 7 to 139 (GMHVNDECKI…SLDIIKGRLN (133 aa)) enclose the ADF-H domain.

It belongs to the actin-binding proteins ADF family. As to expression, expressed in the root trichoblast cells and developed root hairs.

Its subcellular location is the cytoplasm. The protein localises to the cytoskeleton. Functionally, actin-depolymerizing protein. Severs actin filaments (F-actin) and binds to actin monomers. The protein is Actin-depolymerizing factor 8 (ADF8) of Arabidopsis thaliana (Mouse-ear cress).